The chain runs to 427 residues: 3-phosphoshikimate 1-carboxyvinyltransferase (427 aa).

3-phosphoshikimate is bound by residues lysine 22, serine 23, and arginine 27. A phosphoenolpyruvate-binding site is contributed by lysine 22. 2 residues coordinate phosphoenolpyruvate: glycine 96 and arginine 124. 3-phosphoshikimate is bound by residues serine 169, serine 170, glutamine 171, serine 197, aspartate 313, asparagine 336, and lysine 340. Glutamine 171 serves as a coordination point for phosphoenolpyruvate. The active-site Proton acceptor is aspartate 313. Phosphoenolpyruvate contacts are provided by arginine 344, arginine 386, and lysine 411.

The protein belongs to the EPSP synthase family. In terms of assembly, monomer.

It is found in the cytoplasm. It catalyses the reaction 3-phosphoshikimate + phosphoenolpyruvate = 5-O-(1-carboxyvinyl)-3-phosphoshikimate + phosphate. It participates in metabolic intermediate biosynthesis; chorismate biosynthesis; chorismate from D-erythrose 4-phosphate and phosphoenolpyruvate: step 6/7. In terms of biological role, catalyzes the transfer of the enolpyruvyl moiety of phosphoenolpyruvate (PEP) to the 5-hydroxyl of shikimate-3-phosphate (S3P) to produce enolpyruvyl shikimate-3-phosphate and inorganic phosphate. This Escherichia coli (strain SMS-3-5 / SECEC) protein is 3-phosphoshikimate 1-carboxyvinyltransferase.